The following is a 553-amino-acid chain: Hydroxylamine reductase (553 aa).

[2Fe-2S] cluster-binding residues include Cys3, Cys6, Cys18, and Cys25. His252, Glu276, Cys320, Cys408, Cys436, Cys461, Glu495, and Lys497 together coordinate hybrid [4Fe-2O-2S] cluster. Position 408 is a cysteine persulfide (Cys408).

Belongs to the HCP family. It depends on [2Fe-2S] cluster as a cofactor. Hybrid [4Fe-2O-2S] cluster serves as cofactor.

It localises to the cytoplasm. It carries out the reaction A + NH4(+) + H2O = hydroxylamine + AH2 + H(+). In terms of biological role, catalyzes the reduction of hydroxylamine to form NH(3) and H(2)O. This Vibrio vulnificus (strain YJ016) protein is Hydroxylamine reductase.